Consider the following 394-residue polypeptide: Elongation factor Tu (394 aa).

Positions Lys10–Glu204 constitute a tr-type G domain. Positions Gly19–Thr26 are G1. Gly19–Thr26 lines the GTP pocket. Mg(2+) is bound at residue Thr26. Positions Gly60–Asn64 are G2. The G3 stretch occupies residues Asp81 to Gly84. GTP contacts are provided by residues Asp81–His85 and Asn136–Asp139. Positions Asn136–Asp139 are G4. The G5 stretch occupies residues Ser174 to Leu176.

It belongs to the TRAFAC class translation factor GTPase superfamily. Classic translation factor GTPase family. EF-Tu/EF-1A subfamily. Monomer.

It localises to the cytoplasm. It carries out the reaction GTP + H2O = GDP + phosphate + H(+). Its function is as follows. GTP hydrolase that promotes the GTP-dependent binding of aminoacyl-tRNA to the A-site of ribosomes during protein biosynthesis. The protein is Elongation factor Tu of Actinobacillus pleuropneumoniae serotype 5b (strain L20).